The chain runs to 476 residues: Homeobox even-skipped homolog protein 2 (476 aa).

Disordered stretches follow at residues 82–113 and 142–185; these read TGSE…AEAD and KGYA…GSGA. Composition is skewed to low complexity over residues 84-96 and 147-159; these read SEST…SSAA and SGSA…SASG. Positions 160 to 183 are enriched in gly residues; that stretch reads SGLGSLHGGSGGSGGSAALGGSGS. The homeobox DNA-binding region spans 188–247; it reads VRRYRTAFTREQIARLEKEFYRENYVSRPRRCELAAALNLPETTIKVWFQNRRMKDKRQR.

It belongs to the even-skipped homeobox family.

It localises to the nucleus. The protein is Homeobox even-skipped homolog protein 2 (EVX2) of Homo sapiens (Human).